The following is a 611-amino-acid chain: uncharacterized protein (611 aa).

Positions 51–351 constitute an SAC domain; it reads LYGFIRLKIY…DYHKQGSRNL (301 aa).

To yeast RSD1 and S.pombe SpBC19F5.03.

This is an uncharacterized protein from Schizosaccharomyces pombe (strain 972 / ATCC 24843) (Fission yeast).